Reading from the N-terminus, the 484-residue chain is ATP synthase subunit beta (484 aa).

Position 168 to 175 (168 to 175 (GGAGVGKT)) interacts with ATP.

Belongs to the ATPase alpha/beta chains family. In terms of assembly, F-type ATPases have 2 components, CF(1) - the catalytic core - and CF(0) - the membrane proton channel. CF(1) has five subunits: alpha(3), beta(3), gamma(1), delta(1), epsilon(1). CF(0) has three main subunits: a(1), b(2) and c(9-12). The alpha and beta chains form an alternating ring which encloses part of the gamma chain. CF(1) is attached to CF(0) by a central stalk formed by the gamma and epsilon chains, while a peripheral stalk is formed by the delta and b chains.

It is found in the cell membrane. It catalyses the reaction ATP + H2O + 4 H(+)(in) = ADP + phosphate + 5 H(+)(out). Produces ATP from ADP in the presence of a proton gradient across the membrane. The catalytic sites are hosted primarily by the beta subunits. The protein is ATP synthase subunit beta of Pseudarthrobacter chlorophenolicus (strain ATCC 700700 / DSM 12829 / CIP 107037 / JCM 12360 / KCTC 9906 / NCIMB 13794 / A6) (Arthrobacter chlorophenolicus).